We begin with the raw amino-acid sequence, 181 residues long: Adenylate kinase (181 aa).

ATP is bound at residue 10–15 (GAGKGT). Residues 30-59 (STGDLFRYNISNGTELGLEAKKYLDAGDLV) form an NMP region. AMP is bound by residues T31, R36, 57–59 (DLV), 85–88 (GYPR), and Q92. The tract at residues 126–132 (GRGRDDD) is LID. An ATP-binding site is contributed by R127. Residues R129 and R140 each contribute to the AMP site. An ATP-binding site is contributed by G166.

Belongs to the adenylate kinase family. As to quaternary structure, monomer.

It is found in the cytoplasm. The catalysed reaction is AMP + ATP = 2 ADP. It functions in the pathway purine metabolism; AMP biosynthesis via salvage pathway; AMP from ADP: step 1/1. Its function is as follows. Catalyzes the reversible transfer of the terminal phosphate group between ATP and AMP. Plays an important role in cellular energy homeostasis and in adenine nucleotide metabolism. This Mycolicibacterium vanbaalenii (strain DSM 7251 / JCM 13017 / BCRC 16820 / KCTC 9966 / NRRL B-24157 / PYR-1) (Mycobacterium vanbaalenii) protein is Adenylate kinase.